A 174-amino-acid polypeptide reads, in one-letter code: Crossover junction endodeoxyribonuclease RuvC (174 aa).

Catalysis depends on residues D8, E69, and D141. D8, E69, and D141 together coordinate Mg(2+).

The protein belongs to the RuvC family. In terms of assembly, homodimer which binds Holliday junction (HJ) DNA. The HJ becomes 2-fold symmetrical on binding to RuvC with unstacked arms; it has a different conformation from HJ DNA in complex with RuvA. In the full resolvosome a probable DNA-RuvA(4)-RuvB(12)-RuvC(2) complex forms which resolves the HJ. Mg(2+) serves as cofactor.

It is found in the cytoplasm. The catalysed reaction is Endonucleolytic cleavage at a junction such as a reciprocal single-stranded crossover between two homologous DNA duplexes (Holliday junction).. Functionally, the RuvA-RuvB-RuvC complex processes Holliday junction (HJ) DNA during genetic recombination and DNA repair. Endonuclease that resolves HJ intermediates. Cleaves cruciform DNA by making single-stranded nicks across the HJ at symmetrical positions within the homologous arms, yielding a 5'-phosphate and a 3'-hydroxyl group; requires a central core of homology in the junction. The consensus cleavage sequence is 5'-(A/T)TT(C/G)-3'. Cleavage occurs on the 3'-side of the TT dinucleotide at the point of strand exchange. HJ branch migration catalyzed by RuvA-RuvB allows RuvC to scan DNA until it finds its consensus sequence, where it cleaves and resolves the cruciform DNA. The protein is Crossover junction endodeoxyribonuclease RuvC of Xanthomonas oryzae pv. oryzae (strain MAFF 311018).